The chain runs to 66 residues: Small vasohibin-binding protein (66 aa).

The segment covering 1-23 has biased composition (basic and acidic residues); that stretch reads MDPPARKEKPKVKEPVSRIEKAK. Positions 1-32 are disordered; that stretch reads MDPPARKEKPKVKEPVSRIEKAKQKSAQQELK. Residues 5–52 are a coiled coil; the sequence is ARKEKPKVKEPVSRIEKAKQKSAQQELKQRQRAEIYALNRVMTELEQQ.

Belongs to the SVBP family. Interacts with VASH1 and VASH2.

Its subcellular location is the cytoplasm. It localises to the secreted. It is found in the cytoskeleton. Enhances the tyrosine carboxypeptidase activity of VASH1 and VASH2, thereby promoting the removal of the C-terminal tyrosine residue of alpha-tubulin. Also required to enhance the solubility and secretion of VASH1 and VASH2. Plays a role in axon and excitatory synapse formation. The polypeptide is Small vasohibin-binding protein (Bos taurus (Bovine)).